Reading from the N-terminus, the 273-residue chain is Dermonecrotic toxin LruSicTox-alphaIC1d (273 aa).

Residue histidine 5 is part of the active site. Mg(2+) is bound by residues glutamate 25 and aspartate 27. The active-site Nucleophile is histidine 41. 2 disulfides stabilise this stretch: cysteine 45–cysteine 51 and cysteine 47–cysteine 190. Aspartate 85 is a binding site for Mg(2+).

It belongs to the arthropod phospholipase D family. Class II subfamily. It depends on Mg(2+) as a cofactor. In terms of tissue distribution, expressed by the venom gland.

It localises to the secreted. The catalysed reaction is an N-(acyl)-sphingosylphosphocholine = an N-(acyl)-sphingosyl-1,3-cyclic phosphate + choline. It catalyses the reaction an N-(acyl)-sphingosylphosphoethanolamine = an N-(acyl)-sphingosyl-1,3-cyclic phosphate + ethanolamine. It carries out the reaction a 1-acyl-sn-glycero-3-phosphocholine = a 1-acyl-sn-glycero-2,3-cyclic phosphate + choline. The enzyme catalyses a 1-acyl-sn-glycero-3-phosphoethanolamine = a 1-acyl-sn-glycero-2,3-cyclic phosphate + ethanolamine. Its function is as follows. Dermonecrotic toxins cleave the phosphodiester linkage between the phosphate and headgroup of certain phospholipids (sphingolipid and lysolipid substrates), forming an alcohol (often choline) and a cyclic phosphate. This toxin acts on sphingomyelin (SM). It may also act on ceramide phosphoethanolamine (CPE), lysophosphatidylcholine (LPC) and lysophosphatidylethanolamine (LPE), but not on lysophosphatidylserine (LPS), and lysophosphatidylglycerol (LPG). It acts by transphosphatidylation, releasing exclusively cyclic phosphate products as second products. Induces dermonecrosis, hemolysis, increased vascular permeability, edema, inflammatory response, and platelet aggregation. The polypeptide is Dermonecrotic toxin LruSicTox-alphaIC1d (Loxosceles rufescens (Mediterranean recluse spider)).